Here is a 344-residue protein sequence, read N- to C-terminus: Lipase chaperone (344 aa).

Residues 14 to 34 (VAVYGAVGLAAIAGVAIWSGA) form a helical membrane-spanning segment. The segment covering 45–57 (LSADAAARDGASA) has biased composition (low complexity). A disordered region spans residues 45 to 78 (LSADAAARDGASAAPPPPARPASAGMPSPLAGSS).

This sequence belongs to the lipase chaperone family.

Its subcellular location is the cell inner membrane. Functionally, may be involved in the folding of the extracellular lipase during its passage through the periplasm. The polypeptide is Lipase chaperone (Burkholderia ambifaria (strain ATCC BAA-244 / DSM 16087 / CCUG 44356 / LMG 19182 / AMMD) (Burkholderia cepacia (strain AMMD))).